A 756-amino-acid polypeptide reads, in one-letter code: Tubulin glycylase 3B (756 aa).

The segment at 104 to 123 (TPLPRTVTSSPTAPEAQKRQ) is disordered. In terms of domain architecture, TTL spans 272–629 (LEERMAFIED…DLPKNPTAAT (358 aa)). Residues 440–443 (QKYI), Lys453, and Asp455 each bind ATP. Residues 709 to 736 (ITKKKKLSASAGSSTAASAQPSTQNLTT) form a disordered region. Residues 716–727 (SASAGSSTAASA) are compositionally biased toward low complexity.

The protein localises to the cytoplasm. It localises to the cytoskeleton. Its subcellular location is the nucleus. Functionally, essential glycylase which modifies both tubulin and non-tubulin proteins, generating side chains of glycine on the gamma-carboxyl groups of specific glutamate residues of target proteins. Monoglycylates alpha-tubulin by adding a single glycine chain to generate monoglycine side chains, but is not involved in elongation step to generate polyglycine side chains on alpha-tubulin. Has the ability to both mono- and polyglycylate non-tubulin proteins such as up (Troponin T). Required for early steps of spermatogenesis. In Drosophila melanogaster (Fruit fly), this protein is Tubulin glycylase 3B (TTLL3B).